A 2797-amino-acid polypeptide reads, in one-letter code: Nonribosomal peptide synthetase penN (2797 aa).

Residues 239–625 (SRPDHPAICA…ARKDSQVKIR (387 aa)) are adenylation 1. One can recognise a Carrier 1 domain in the interval 751–824 (TDTERHVHRF…DIVSLVRTAT (74 aa)). Position 785 is an O-(pantetheine 4'-phosphoryl)serine (Ser785). The interval 830-856 (PSAGAEISRSDAPTESPATGSFEGSGY) is disordered. Positions 870-1299 (QSFSQARMWF…DIEIGSLLLT (430 aa)) are condensation 1. Positions 1328 to 1731 (FHQQVAAHGD…GRMDQQVKIR (404 aa)) are adenylation 2. A methyltransferase region spans residues 1857–1953 (LEIGTGTGMI…VIKQLIQLHD (97 aa)). The 75-residue stretch at 2277 to 2351 (SFTDDIERAM…RLAGRVRGFR (75 aa)) folds into the Carrier 2 domain. Ser2311 carries the post-translational modification O-(pantetheine 4'-phosphoryl)serine. The interval 2516–2658 (YDGISLSSIL…VNRTLIRVQL (143 aa)) is condensation 2.

The protein belongs to the NRP synthetase family.

The enzyme catalyses O-methyl-L-tyrosine + anthranilate + S-adenosyl-L-methionine + 2 ATP = (-)-4'-methoxycyclopeptine + 2 AMP + S-adenosyl-L-homocysteine + 2 diphosphate + 2 H(+). It carries out the reaction anthranilate + L-phenylalanine + S-adenosyl-L-methionine + 2 ATP = cyclopeptine + 2 AMP + S-adenosyl-L-homocysteine + 2 diphosphate + 2 H(+). It participates in secondary metabolite biosynthesis. Its pathway is alkaloid biosynthesis. It functions in the pathway mycotoxin biosynthesis. Functionally, nonribosomal peptide synthetase; part of the gene cluster that mediates the biosynthesis of penigequinolones, potent insecticidal alkaloids that contain a highly modified 10-carbon prenyl group. The first stage is catalyzed by the nonribosomal peptide synthetase penN that condenses anthranilic acid and O-methyl-L-tyrosine to produce 4'-methoxycyclopeptin. 4'-methoxycyclopeptin is then converted to 4'-methoxydehydrocyclopeptin by the ketoglutarate-dependent dioxygenase penM through dehydrogenation to form a double bond between C-alpha and C-beta of the O-methyltyrosine side chain. PenM also converts its first product methoxydehydrocyclopeptin to 4'-methoxycyclopenin. The following conversion of 4'methoxycyclopenin into 4'-methoxyviridicatin is catalyzed by the cyclopenase penL. 4'-methoxyviridicatin is the precursor of quinolone natural products, and is further converted to quinolinone B. The prenyltransferase penI then catalyzes the canonical Friedel-Crafts alkylation of quinolinone B with dimethylallyl cation to yield dimethylallyl quinolone, which is subjected to FAD-dependent dehydrogenation by the FAD-linked oxidoreductase penH to yield conjugated aryl diene. The delta(3') double bond then serves as the site of the second alkylation with DMAPP catalyzed by the prenyltransferase penG to yield a carbenium ion intermediate, which can be attacked by H(2)O to yield a styrenyl quinolone containing a C3'-hydroxyprenyl chain, or undergo cyclization to yield yaequinolones J1 and J2. The conversion of the styrenyl quinolone into the tetrahydrofuran-containing yaequinolone C is performed by the FAD-dependent monooxygenase penE and involves epoxidation of the terminal C7'-C8' olefin, followed by epoxide ring opening initiated by the C3' hydroxyl group. The predicted cysteine hydrolase penJ acts as an epoxide hydrolase that enhances the rate of the 5-exo-tet cyclization step, increasing the yield of yaequinolone C. PenF catalyzes the cationic rearrangement of the epoxide formed by penE (before ring opening to produce yaequinolone C) into yaequinolone D. Finally, the short-chain dehydrogenase/reductase (SDR)-like reductase penD, catalyzes both the dehydration of yaequinolone D and the reduction of the resulting oxonium to yield penigequinolone. This chain is Nonribosomal peptide synthetase penN, found in Penicillium thymicola.